The sequence spans 255 residues: Aliphatic sulfonates import ATP-binding protein SsuB (255 aa).

One can recognise an ABC transporter domain in the interval 12 to 233 (LLLNAVSKHY…RLGSVRLAEL (222 aa)). 44 to 51 (GRSGGGKS) provides a ligand contact to ATP.

The protein belongs to the ABC transporter superfamily. Aliphatic sulfonates importer (TC 3.A.1.17.2) family. As to quaternary structure, the complex is composed of two ATP-binding proteins (SsuB), two transmembrane proteins (SsuC) and a solute-binding protein (SsuA).

The protein localises to the cell inner membrane. It catalyses the reaction ATP + H2O + aliphatic sulfonate-[sulfonate-binding protein]Side 1 = ADP + phosphate + aliphatic sulfonateSide 2 + [sulfonate-binding protein]Side 1.. Part of the ABC transporter complex SsuABC involved in aliphatic sulfonates import. Responsible for energy coupling to the transport system. In Shigella flexneri, this protein is Aliphatic sulfonates import ATP-binding protein SsuB.